The primary structure comprises 253 residues: HTH-type transcriptional regulator YdeO (253 aa).

Residues 137-233 enclose the HTH araC/xylS-type domain; sequence GKVRNIVNMK…GNSPKRVSKE (97 aa). 2 DNA-binding regions (H-T-H motif) span residues 154 to 175 and 200 to 223; these read KDIC…KQEQ and VNKI…RKHF.

Its function is as follows. Induces the expression of gadE and mdtEF. Could also regulate the expression of other genes involved in acid resistance. This Escherichia coli O157:H7 protein is HTH-type transcriptional regulator YdeO.